The chain runs to 783 residues: Probable alpha,alpha-trehalose-phosphate synthase [UDP-forming] 3 (783 aa).

The glycosyltransferase stretch occupies residues 11 to 456 (QTLLVVANRL…GFDFLSELND (446 aa)).

In the N-terminal section; belongs to the glycosyltransferase 20 family. The protein in the C-terminal section; belongs to the trehalose phosphatase family.

The catalysed reaction is D-glucose 6-phosphate + UDP-alpha-D-glucose = alpha,alpha-trehalose 6-phosphate + UDP + H(+). This Arabidopsis thaliana (Mouse-ear cress) protein is Probable alpha,alpha-trehalose-phosphate synthase [UDP-forming] 3 (TPS3).